Here is a 404-residue protein sequence, read N- to C-terminus: Multidrug resistance protein MdtG (404 aa).

The next 11 membrane-spanning stretches (helical) occupy residues 19–39 (LGCF…PLYV), 56–76 (LVFS…GGLA), 90–110 (LGMA…QFLI), 113–133 (ALLG…ATQV), 144–164 (TLST…GLLA), 171–191 (PVFF…FFFI), 222–242 (LFVT…ILTL), 254–274 (IAFI…LSAP), 288–308 (ILIV…FVQT), 317–337 (FLLG…LVYN), and 376–396 (AVFC…WNSL).

This sequence belongs to the major facilitator superfamily. DHA1 family. MdtG (TC 2.A.1.2.20) subfamily.

It localises to the cell inner membrane. The protein is Multidrug resistance protein MdtG of Salmonella dublin (strain CT_02021853).